A 509-amino-acid chain; its full sequence is ATP synthase subunit alpha (509 aa).

169–176 (GDRQTGKT) lines the ATP pocket.

It belongs to the ATPase alpha/beta chains family. In terms of assembly, F-type ATPases have 2 components, CF(1) - the catalytic core - and CF(0) - the membrane proton channel. CF(1) has five subunits: alpha(3), beta(3), gamma(1), delta(1), epsilon(1). CF(0) has three main subunits: a(1), b(2) and c(9-12). The alpha and beta chains form an alternating ring which encloses part of the gamma chain. CF(1) is attached to CF(0) by a central stalk formed by the gamma and epsilon chains, while a peripheral stalk is formed by the delta and b chains.

It is found in the cell inner membrane. It carries out the reaction ATP + H2O + 4 H(+)(in) = ADP + phosphate + 5 H(+)(out). Its function is as follows. Produces ATP from ADP in the presence of a proton gradient across the membrane. The alpha chain is a regulatory subunit. This chain is ATP synthase subunit alpha, found in Rhizobium etli (strain ATCC 51251 / DSM 11541 / JCM 21823 / NBRC 15573 / CFN 42).